The sequence spans 644 residues: Kelch-like protein 34 (644 aa).

The 68-residue stretch at 29-96 (CDVTLETEGS…IYTAWLSLSM (68 aa)) folds into the BTB domain. A BACK domain is found at 131–238 (CCFAANVAAR…PADVLRRVYS (108 aa)). Residues 304 to 329 (AARGQVAAPEPEEEEEELEEEEEEEE) form a disordered region. Residues 313 to 329 (EPEEEEEELEEEEEEEE) show a composition bias toward acidic residues. 6 Kelch repeats span residues 320–366 (ELEE…TAGN), 367–425 (FLFV…AVGE), 426–473 (RLLA…VGDR), 475–526 (VVYI…VLRG), 528–571 (VFAF…VVEE), and 573–623 (ALLL…VLQL).

In Homo sapiens (Human), this protein is Kelch-like protein 34 (KLHL34).